A 74-amino-acid polypeptide reads, in one-letter code: Conotoxin VnMEKL-0221 (74 aa).

The signal sequence occupies residues 1–19; that stretch reads MEKLTILLLVAAVLMWTQA. Residues 20 to 46 constitute a propeptide that is removed on maturation; sequence LIQEKRPKEKIKFLSKRKTTAESWWEG. 3 disulfides stabilise this stretch: Cys-48-Cys-62, Cys-55-Cys-66, and Cys-61-Cys-71.

The protein belongs to the conotoxin O2 superfamily. As to expression, expressed by the venom duct.

It is found in the secreted. The chain is Conotoxin VnMEKL-0221 from Conus ventricosus (Mediterranean cone).